We begin with the raw amino-acid sequence, 487 residues long: E3 ubiquitin-protein ligase RNF8 (487 aa).

The 55-residue stretch at 38 to 92 (VTVGRGFGVTYQLVSKICPLMISRNHCILKQNAEGQWTIKDNKSLNGVWLNRERL) folds into the FHA domain. The segment at 68-72 (QNAEG) is required for interaction with PIWIL1. Disordered regions lie at residues 143 to 176 (MMEKNKGLRTKRKFSLDELEGSGAEGPSNLKSKI) and 182 to 201 (EPGQQVKSHGKGKVASQPSE). Ser157 bears the Phosphoserine mark. The RING-type zinc-finger motif lies at 405–443 (CIICSEYFVEAVTLNCAHSFCSYCINEWMKRKVECPICR).

It belongs to the RNF8 family. Homodimer. Forms a E2-E3 ubiquitin ligase complex composed of the RNF8 homodimer and a E2 heterodimer of UBE2N and UBE2V2. Interacts with class III E2s, including UBE2E1, UBE2E2, and UBE2E3 and with UBE2N. Interacts with RXRA. Interacts (via FHA domain) with phosphorylated HERC2 (via C-terminus). Interacts with PIWIL1; leading to sequester RNF8 in the cytoplasm. Interacts with WRAP53/TCAB1. In terms of processing, autoubiquitinated through 'Lys-48' and 'Lys-63' of ubiquitin. 'Lys-63' polyubiquitination is mediated by UBE2N. 'Lys-29'-type polyubiquitination is also observed, but it doesn't require its own functional RING-type zinc finger.

Its subcellular location is the nucleus. The protein resides in the cytoplasm. The protein localises to the midbody. It is found in the chromosome. It localises to the telomere. It carries out the reaction S-ubiquitinyl-[E2 ubiquitin-conjugating enzyme]-L-cysteine + [acceptor protein]-L-lysine = [E2 ubiquitin-conjugating enzyme]-L-cysteine + N(6)-ubiquitinyl-[acceptor protein]-L-lysine.. The protein operates within protein modification; protein ubiquitination. In terms of biological role, E3 ubiquitin-protein ligase that plays a key role in DNA damage signaling via 2 distinct roles: by mediating the 'Lys-63'-linked ubiquitination of histones H2A and H2AX and promoting the recruitment of DNA repair proteins at double-strand breaks (DSBs) sites, and by catalyzing 'Lys-48'-linked ubiquitination to remove target proteins from DNA damage sites. Following DNA DSBs, it is recruited to the sites of damage by ATM-phosphorylated MDC1 and catalyzes the 'Lys-63'-linked ubiquitination of histones H2A and H2AX, thereby promoting the formation of TP53BP1 and BRCA1 ionizing radiation-induced foci (IRIF). Also controls the recruitment of UIMC1-BRCC3 (RAP80-BRCC36) and PAXIP1/PTIP to DNA damage sites. Promotes the recruitment of NBN to DNA damage sites by catalyzing 'Lys-6'-linked ubiquitination of NBN. Also recruited at DNA interstrand cross-links (ICLs) sites and catalyzes 'Lys-63'-linked ubiquitination of histones H2A and H2AX, leading to recruitment of FAAP20 and Fanconi anemia (FA) complex, followed by interstrand cross-link repair. H2A ubiquitination also mediates the ATM-dependent transcriptional silencing at regions flanking DSBs in cis, a mechanism to avoid collision between transcription and repair intermediates. Promotes the formation of 'Lys-63'-linked polyubiquitin chains via interactions with the specific ubiquitin-conjugating UBE2N/UBC13 and ubiquitinates non-histone substrates such as PCNA. Substrates that are polyubiquitinated at 'Lys-63' are usually not targeted for degradation. Also catalyzes the formation of 'Lys-48'-linked polyubiquitin chains via interaction with the ubiquitin-conjugating UBE2L6/UBCH8, leading to degradation of substrate proteins such as CHEK2, JMJD2A/KDM4A and KU80/XRCC5: it is still unclear how the preference toward 'Lys-48'- versus 'Lys-63'-linked ubiquitination is regulated but it could be due to RNF8 ability to interact with specific E2 specific ligases. For instance, interaction with phosphorylated HERC2 promotes the association between RNF8 and UBE2N/UBC13 and favors the specific formation of 'Lys-63'-linked ubiquitin chains. Promotes non-homologous end joining (NHEJ) by promoting the 'Lys-48'-linked ubiquitination and degradation the of KU80/XRCC5. Following DNA damage, mediates the ubiquitination and degradation of JMJD2A/KDM4A in collaboration with RNF168, leading to unmask H4K20me2 mark and promote the recruitment of TP53BP1 at DNA damage sites. Following DNA damage, mediates the ubiquitination and degradation of POLD4/p12, a subunit of DNA polymerase delta. In the absence of POLD4, DNA polymerase delta complex exhibits higher proofreading activity. In addition to its function in damage signaling, also plays a role in higher-order chromatin structure by mediating extensive chromatin decondensation. Involved in the activation of ATM by promoting histone H2B ubiquitination, which indirectly triggers histone H4 'Lys-16' acetylation (H4K16ac), establishing a chromatin environment that promotes efficient activation of ATM kinase. Required in the testis, where it plays a role in the replacement of histones during spermatogenesis. At uncapped telomeres, promotes the joining of deprotected chromosome ends by inducing H2A ubiquitination and TP53BP1 recruitment, suggesting that it may enhance cancer development by aggravating telomere-induced genome instability in case of telomeric crisis. Promotes the assembly of RAD51 at DNA DSBs in the absence of BRCA1 and TP53BP1 Also involved in class switch recombination in immune system, via its role in regulation of DSBs repair. May be required for proper exit from mitosis after spindle checkpoint activation and may regulate cytokinesis. May play a role in the regulation of RXRA-mediated transcriptional activity. Not involved in RXRA ubiquitination by UBE2E2. The protein is E3 ubiquitin-protein ligase RNF8 of Bos taurus (Bovine).